We begin with the raw amino-acid sequence, 191 residues long: Molybdenum cofactor guanylyltransferase (191 aa).

Residues 11 to 13, Lys-23, Asp-66, and Asp-97 each bind GTP; that span reads LCG. Asp-97 is a Mg(2+) binding site.

The protein belongs to the MobA family. Monomer. Mg(2+) is required as a cofactor.

Its subcellular location is the cytoplasm. The catalysed reaction is Mo-molybdopterin + GTP + H(+) = Mo-molybdopterin guanine dinucleotide + diphosphate. Functionally, transfers a GMP moiety from GTP to Mo-molybdopterin (Mo-MPT) cofactor (Moco or molybdenum cofactor) to form Mo-molybdopterin guanine dinucleotide (Mo-MGD) cofactor. In Campylobacter jejuni subsp. doylei (strain ATCC BAA-1458 / RM4099 / 269.97), this protein is Molybdenum cofactor guanylyltransferase.